We begin with the raw amino-acid sequence, 284 residues long: Bifunctional protein FolD (284 aa).

Residues 164–166 (GRS) and S189 each bind NADP(+).

It belongs to the tetrahydrofolate dehydrogenase/cyclohydrolase family. As to quaternary structure, homodimer.

The enzyme catalyses (6R)-5,10-methylene-5,6,7,8-tetrahydrofolate + NADP(+) = (6R)-5,10-methenyltetrahydrofolate + NADPH. The catalysed reaction is (6R)-5,10-methenyltetrahydrofolate + H2O = (6R)-10-formyltetrahydrofolate + H(+). It functions in the pathway one-carbon metabolism; tetrahydrofolate interconversion. Catalyzes the oxidation of 5,10-methylenetetrahydrofolate to 5,10-methenyltetrahydrofolate and then the hydrolysis of 5,10-methenyltetrahydrofolate to 10-formyltetrahydrofolate. The chain is Bifunctional protein FolD from Listeria monocytogenes serovar 1/2a (strain ATCC BAA-679 / EGD-e).